The chain runs to 792 residues: Xaa-Pro dipeptidyl-peptidase (792 aa).

Residues Ser363, Asp482, and His513 each act as charge relay system in the active site.

Belongs to the peptidase S15 family. In terms of assembly, homodimer.

The protein resides in the cytoplasm. It catalyses the reaction Hydrolyzes Xaa-Pro-|- bonds to release unblocked, N-terminal dipeptides from substrates including Ala-Pro-|-p-nitroanilide and (sequentially) Tyr-Pro-|-Phe-Pro-|-Gly-Pro-|-Ile.. Removes N-terminal dipeptides sequentially from polypeptides having unsubstituted N-termini provided that the penultimate residue is proline. The protein is Xaa-Pro dipeptidyl-peptidase of Lactobacillus delbrueckii subsp. bulgaricus (strain ATCC BAA-365 / Lb-18).